The primary structure comprises 125 residues: Large ribosomal subunit protein bL12 (125 aa).

This sequence belongs to the bacterial ribosomal protein bL12 family. Homodimer. Part of the ribosomal stalk of the 50S ribosomal subunit. Forms a multimeric L10(L12)X complex, where L10 forms an elongated spine to which 2 to 4 L12 dimers bind in a sequential fashion. Binds GTP-bound translation factors.

Its function is as follows. Forms part of the ribosomal stalk which helps the ribosome interact with GTP-bound translation factors. Is thus essential for accurate translation. The sequence is that of Large ribosomal subunit protein bL12 from Afipia carboxidovorans (strain ATCC 49405 / DSM 1227 / KCTC 32145 / OM5) (Oligotropha carboxidovorans).